Reading from the N-terminus, the 323-residue chain is Transposase for insertion sequence element IS6120 (323 aa).

A disordered region spans residues 300-323; it reads ERPTDITPPTSPSDGGQHAGTEVA. Residues 304–313 are compositionally biased toward low complexity; the sequence is DITPPTSPSD.

This sequence belongs to the transposase mutator family.

Its function is as follows. Required for the transposition of the insertion element. The protein is Transposase for insertion sequence element IS6120 of Mycolicibacterium smegmatis (Mycobacterium smegmatis).